Here is a 190-residue protein sequence, read N- to C-terminus: Thioredoxin F-type, chloroplastic (190 aa).

The interval 1-31 (MALHLSLSHQSWTSPAHPITSSDPTRSSVPG) is disordered. The transit peptide at 1 to 77 (MALHLSLSHQ…SMEQALGTQE (77 aa)) directs the protein to the chloroplast. Over residues 7 to 30 (LSHQSWTSPAHPITSSDPTRSSVP) the composition is skewed to polar residues. The Thioredoxin domain occupies 78-189 (MEAIVGKVTE…LLEAIQAARS (112 aa)). Catalysis depends on nucleophile residues Cys114 and Cys117. Residues Cys114 and Cys117 are joined by a disulfide bond.

Belongs to the thioredoxin family. Plant F-type subfamily. Forms a complex with heterodimeric ferredoxin-thioredoxin reductase (FTR) and ferredoxin.

It localises to the plastid. Its subcellular location is the chloroplast. Functionally, participates in various redox reactions through the reversible oxidation of the active center dithiol to a disulfide. The F form is known to activate a number of enzymes of the photosynthetic carbon cycle. This chain is Thioredoxin F-type, chloroplastic, found in Spinacia oleracea (Spinach).